Consider the following 662-residue polypeptide: ATP-dependent zinc metalloprotease YME1 homolog (662 aa).

ATP is bound at residue 206-213 (GPPGVGKT). His425 is a Zn(2+) binding site. The active site involves Glu426. Residues His429 and Asp503 each contribute to the Zn(2+) site.

In the N-terminal section; belongs to the AAA ATPase family. The protein in the C-terminal section; belongs to the peptidase M41 family. The cofactor is Zn(2+).

Putative ATP-dependent protease. This is ATP-dependent zinc metalloprotease YME1 homolog from Schistosoma mansoni (Blood fluke).